Here is a 258-residue protein sequence, read N- to C-terminus: Type III pantothenate kinase (258 aa).

6–13 provides a ligand contact to ATP; sequence DVGNTQIF. Substrate is bound at residue 107–110; it reads GADR. D109 (proton acceptor) is an active-site residue. D130 lines the K(+) pocket. Position 133 (T133) interacts with ATP. A substrate-binding site is contributed by T185.

The protein belongs to the type III pantothenate kinase family. Homodimer. NH4(+) serves as cofactor. K(+) is required as a cofactor.

The protein localises to the cytoplasm. It catalyses the reaction (R)-pantothenate + ATP = (R)-4'-phosphopantothenate + ADP + H(+). It functions in the pathway cofactor biosynthesis; coenzyme A biosynthesis; CoA from (R)-pantothenate: step 1/5. Its function is as follows. Catalyzes the phosphorylation of pantothenate (Pan), the first step in CoA biosynthesis. In Elusimicrobium minutum (strain Pei191), this protein is Type III pantothenate kinase.